Consider the following 259-residue polypeptide: Proteasome subunit alpha (259 aa).

Belongs to the peptidase T1A family. As to quaternary structure, the 20S proteasome core is composed of 14 alpha and 14 beta subunits that assemble into four stacked heptameric rings, resulting in a barrel-shaped structure. The two inner rings, each composed of seven catalytic beta subunits, are sandwiched by two outer rings, each composed of seven alpha subunits. The catalytic chamber with the active sites is on the inside of the barrel. Has a gated structure, the ends of the cylinder being occluded by the N-termini of the alpha-subunits. Is capped at one or both ends by the proteasome regulatory ATPase, PAN.

It localises to the cytoplasm. Its activity is regulated as follows. The formation of the proteasomal ATPase PAN-20S proteasome complex, via the docking of the C-termini of PAN into the intersubunit pockets in the alpha-rings, triggers opening of the gate for substrate entry. Interconversion between the open-gate and close-gate conformations leads to a dynamic regulation of the 20S proteasome proteolysis activity. Component of the proteasome core, a large protease complex with broad specificity involved in protein degradation. The chain is Proteasome subunit alpha from Methanococcus maripaludis (strain C6 / ATCC BAA-1332).